The primary structure comprises 110 residues: Large ribosomal subunit protein uL22 (110 aa).

The protein belongs to the universal ribosomal protein uL22 family. As to quaternary structure, part of the 50S ribosomal subunit.

Its function is as follows. This protein binds specifically to 23S rRNA; its binding is stimulated by other ribosomal proteins, e.g. L4, L17, and L20. It is important during the early stages of 50S assembly. It makes multiple contacts with different domains of the 23S rRNA in the assembled 50S subunit and ribosome. In terms of biological role, the globular domain of the protein is located near the polypeptide exit tunnel on the outside of the subunit, while an extended beta-hairpin is found that lines the wall of the exit tunnel in the center of the 70S ribosome. In Exiguobacterium sibiricum (strain DSM 17290 / CCUG 55495 / CIP 109462 / JCM 13490 / 255-15), this protein is Large ribosomal subunit protein uL22.